A 2185-amino-acid chain; its full sequence is Genome polyprotein (2185 aa).

Glycine 2 is lipidated: N-myristoyl glycine; by host. At glycine 2–glutamine 1495 the chain is on the cytoplasmic side. The amphipathic alpha-helix stretch occupies residues phenylalanine 566 to valine 582. Residues histidine 872 and aspartate 890 each act as for protease 2A activity in the active site. Cysteine 907 and cysteine 909 together coordinate Zn(2+). The active-site For protease 2A activity is cysteine 961. Residues cysteine 967 and histidine 969 each coordinate Zn(2+). The membrane-binding stretch occupies residues asparagine 1101–glutamine 1173. The interval asparagine 1101–threonine 1239 is oligomerization. Residues alanine 1122–glutamine 1126 form an RNA-binding region. Positions glutamate 1205–asparagine 1361 constitute an SF3 helicase domain. Residues cysteine 1369, cysteine 1381, and cysteine 1386 each contribute to the Zn(2+) site. Residues cysteine 1369–cysteine 1386 form a C4-type; degenerate zinc finger. Residues glutamate 1413–valine 1420 are RNA-binding. The interval leucine 1424–glutamine 1429 is oligomerization. Residues alanine 1496 to tyrosine 1511 lie within the membrane without spanning it. Residues lysine 1512–phenylalanine 2185 are Cytoplasmic-facing. The residue at position 1521 (tyrosine 1521) is an O-(5'-phospho-RNA)-tyrosine. The Peptidase C3 domain occupies glycine 1541–phenylalanine 1719. Catalysis depends on for protease 3C activity residues histidine 1580, glutamate 1611, and cysteine 1687. Residues glycine 1950–leucine 2066 enclose the RdRp catalytic domain. Residues aspartate 1956 and aspartate 2052 each contribute to the Mg(2+) site.

It belongs to the picornaviruses polyprotein family. In terms of assembly, interacts with capsid protein VP1 and capsid protein VP3 to form heterotrimeric protomers. As to quaternary structure, interacts with capsid protein VP0, and capsid protein VP3 to form heterotrimeric protomers. Five protomers subsequently associate to form pentamers which serve as building blocks for the capsid. Interacts with capsid protein VP2, capsid protein VP3 and capsid protein VP4 following cleavage of capsid protein VP0. Interacts with host CXADR. Interacts with capsid protein VP1 and capsid protein VP3 in the mature capsid. In terms of assembly, interacts with capsid protein VP0 and capsid protein VP1 to form heterotrimeric protomers. Five protomers subsequently associate to form pentamers which serve as building blocks for the capsid. Interacts with capsid protein VP4 in the mature capsid. Interacts with protein 2C; this interaction may be important for virion morphogenesis. As to quaternary structure, interacts with capsid protein VP1 and capsid protein VP3. Homodimer. In terms of assembly, homohexamer; forms a hexameric ring structure with 6-fold symmetry characteristic of AAA+ ATPases. Interacts (via N-terminus) with host RTN3 (via reticulon domain); this interaction is important for viral replication. Interacts with capsid protein VP3; this interaction may be important for virion morphogenesis. As to quaternary structure, interacts with protein 3CD. Homodimer. Interacts with host GBF1. Interacts (via GOLD domain) with host ACBD3 (via GOLD domain); this interaction allows the formation of a viral protein 3A/ACBD3 heterotetramer with a 2:2 stoichiometry, which will stimulate the recruitment of host PI4KB in order to synthesize PI4P at the viral RNA replication sites. In terms of assembly, interacts with RNA-directed RNA polymerase. As to quaternary structure, interacts with protein 3AB and with RNA-directed RNA polymerase. Interacts with Viral protein genome-linked and with protein 3CD. It depends on Mg(2+) as a cofactor. Post-translationally, specific enzymatic cleavages in vivo by the viral proteases yield processing intermediates and the mature proteins. Myristoylation is required for the formation of pentamers during virus assembly. Further assembly of 12 pentamers and a molecule of genomic RNA generates the provirion. In terms of processing, during virion maturation, immature virions are rendered infectious following cleavage of VP0 into VP4 and VP2. This maturation seems to be an autocatalytic event triggered by the presence of RNA in the capsid and it is followed by a conformational change infectious virion. Post-translationally, myristoylation is required during RNA encapsidation and formation of the mature virus particle. VPg is uridylylated by the polymerase into VPg-pUpU. This acts as a nucleotide-peptide primer for the genomic RNA replication.

Its subcellular location is the virion. The protein localises to the host cytoplasm. The protein resides in the host cytoplasmic vesicle membrane. It localises to the host nucleus. The catalysed reaction is a ribonucleoside 5'-triphosphate + H2O = a ribonucleoside 5'-diphosphate + phosphate + H(+). The enzyme catalyses Selective cleavage of Tyr-|-Gly bond in the picornavirus polyprotein.. It carries out the reaction RNA(n) + a ribonucleoside 5'-triphosphate = RNA(n+1) + diphosphate. It catalyses the reaction Selective cleavage of Gln-|-Gly bond in the poliovirus polyprotein. In other picornavirus reactions Glu may be substituted for Gln, and Ser or Thr for Gly.. Replication or transcription is subject to high level of random mutations by the nucleotide analog ribavirin. Its function is as follows. Forms an icosahedral capsid of pseudo T=3 symmetry with capsid proteins VP2 and VP3. The capsid is 300 Angstroms in diameter, composed of 60 copies of each capsid protein and enclosing the viral positive strand RNA genome. Capsid protein VP1 mainly forms the vertices of the capsid. Capsid protein VP1 interacts with host CXADR to provide virion attachment to target host cells. This attachment induces virion internalization. Tyrosine kinases are probably involved in the entry process. After binding to its receptor, the capsid undergoes conformational changes. Capsid protein VP1 N-terminus (that contains an amphipathic alpha-helix) and capsid protein VP4 are externalized. Together, they shape a pore in the host membrane through which viral genome is translocated to host cell cytoplasm. Functionally, forms an icosahedral capsid of pseudo T=3 symmetry with capsid proteins VP2 and VP3. The capsid is 300 Angstroms in diameter, composed of 60 copies of each capsid protein and enclosing the viral positive strand RNA genome. Lies on the inner surface of the capsid shell. After binding to the host receptor, the capsid undergoes conformational changes. Capsid protein VP4 is released, Capsid protein VP1 N-terminus is externalized, and together, they shape a pore in the host membrane through which the viral genome is translocated into the host cell cytoplasm. In terms of biological role, component of immature procapsids, which is cleaved into capsid proteins VP4 and VP2 after maturation. Allows the capsid to remain inactive before the maturation step. Its function is as follows. Cysteine protease that cleaves viral polyprotein and specific host proteins. It is responsible for the autocatalytic cleavage between the P1 and P2 regions, which is the first cleavage occurring in the polyprotein. Also cleaves the host translation initiation factor EIF4G1, in order to shut down the capped cellular mRNA translation. Inhibits the host nucleus-cytoplasm protein and RNA trafficking by cleaving host members of the nuclear pores. Counteracts stress granule formation probably by antagonizing its assembly or promoting its dissassembly. Functionally, plays an essential role in the virus replication cycle by acting as a viroporin. Creates a pore in the host endoplasmic reticulum and as a consequence releases Ca2+ in the cytoplasm of infected cell. In turn, high levels of cytoplasmic calcium may trigger membrane trafficking and transport of viral ER-associated proteins to viroplasms, sites of viral genome replication. Induces and associates with structural rearrangements of intracellular membranes. Displays RNA-binding, nucleotide binding and NTPase activities. May play a role in virion morphogenesis and viral RNA encapsidation by interacting with the capsid protein VP3. In terms of biological role, localizes the viral replication complex to the surface of membranous vesicles. Together with protein 3CD binds the Cis-Active RNA Element (CRE) which is involved in RNA synthesis initiation. Acts as a cofactor to stimulate the activity of 3D polymerase, maybe through a nucleid acid chaperone activity. Its function is as follows. Localizes the viral replication complex to the surface of membranous vesicles. It inhibits host cell endoplasmic reticulum-to-Golgi apparatus transport and causes the disassembly of the Golgi complex, possibly through GBF1 interaction. This would result in depletion of MHC, trail receptors and IFN receptors at the host cell surface. Plays an essential role in viral RNA replication by recruiting ACBD3 and PI4KB at the viral replication sites, thereby allowing the formation of the rearranged membranous structures where viral replication takes place. Functionally, acts as a primer for viral RNA replication and remains covalently bound to viral genomic RNA. VPg is uridylylated prior to priming replication into VPg-pUpU. The oriI viral genomic sequence may act as a template for this. The VPg-pUpU is then used as primer on the genomic RNA poly(A) by the RNA-dependent RNA polymerase to replicate the viral genome. During genome replication, the VPg-RNA linkage is removed by the host TDP2, thereby accelerating replication. During the late stage of the replication cycle, host TDP2 is excluded from sites of viral RNA synthesis and encapsidation, allowing for the generation of progeny virions. Involved in the viral replication complex and viral polypeptide maturation. It exhibits protease activity with a specificity and catalytic efficiency that is different from protease 3C. Protein 3CD lacks polymerase activity. Protein 3CD binds to the 5'UTR of the viral genome. In terms of biological role, replicates the viral genomic RNA on the surface of intracellular membranes. May form linear arrays of subunits that propagate along a strong head-to-tail interaction called interface-I. Covalently attaches UMP to a tyrosine of VPg, which is used to prime RNA synthesis. The positive stranded RNA genome is first replicated at virus induced membranous vesicles, creating a dsRNA genomic replication form. This dsRNA is then used as template to synthesize positive stranded RNA genomes. ss(+)RNA genomes are either translated, replicated or encapsidated. Its function is as follows. Major viral protease that mediates proteolytic processing of the polyprotein. Cleaves host EIF5B, contributing to host translation shutoff. Also cleaves host PABPC1, contributing to host translation shutoff. Cleaves host NLRP1, triggers host N-glycine-mediated degradation of the autoinhibitory NLRP1 N-terminal fragment. This is Genome polyprotein from Sus scrofa (Pig).